A 40-amino-acid polypeptide reads, in one-letter code: Antifungal protein ginkbilobin-1 (40 aa).

Residues 3–40 (TAFVSSAHNTQKIPAGAPFNRNLRAMLADLRQNAAFAG) enclose the Gnk2-homologous domain. An alpha-D-mannopyranose-binding site is contributed by Asn11.

In terms of tissue distribution, expressed in seeds (at the protein level).

In terms of biological role, possesses antifungal activity against B.cinerea, M.arachidicola, F.oxysporum, R.solani and C.comatus and moderate antibacterial activity against S.aureus, P.aeruginosa and E.coli. Inhibits HIV-1 reverse transcriptase and proliferation of murine splenocytes. Exerts antifungal activity through its carbohydrate-binding specificity. This chain is Antifungal protein ginkbilobin-1, found in Ginkgo biloba (Ginkgo).